The primary structure comprises 617 residues: Ceramide transfer protein (617 aa).

Residues 1-11 show a composition bias toward polar residues; that stretch reads MSDNQSWNSSG. Residues 1–23 form a disordered region; that stretch reads MSDNQSWNSSGSEEDLETESGPP. A PH domain is found at 23 to 117; the sequence is PVERCGVLSK…WIDSIEQHKS (95 aa). Positions 268–302 form a coiled coil; the sequence is REDSWQKRLDKEIEKRRRVEEAYKNAMTELKKKSH. Residues 320-326 carry the FFAT motif; that stretch reads EFFDAVE. Residues 332–344 are compositionally biased toward basic and acidic residues; sequence QDKIEQSQSEKGR. A disordered region spans residues 332-355; the sequence is QDKIEQSQSEKGRSHWPSSLPSTE. An START domain is found at 383-611; the sequence is DEHRFRIQVE…FTSYVQEKTA (229 aa). An N-acylsphing-4-enine is bound by residues E466, Q487, N524, and Y572.

The protein resides in the cytoplasm. The protein localises to the golgi apparatus. It localises to the endoplasmic reticulum. It catalyses the reaction N-hexadecanoylsphing-4-enine(in) = N-hexadecanoylsphing-4-enine(out). May mediate the intracellular trafficking of ceramide in a non-vesicular manner. The polypeptide is Ceramide transfer protein (cert1) (Xenopus tropicalis (Western clawed frog)).